Consider the following 441-residue polypeptide: Ribosomal protein uS12 methylthiotransferase RimO (441 aa).

In terms of domain architecture, MTTase N-terminal spans 8–118; the sequence is PKIGFVSLGC…VLEHVHHYTP (111 aa). Positions 17, 53, 82, 150, 154, and 157 each coordinate [4Fe-4S] cluster. A Radical SAM core domain is found at 136–373; it reads LTPRHYAYLK…MQLQQQISAE (238 aa). The region spanning 376–441 is the TRAM domain; sequence QEKVGREILV…DEYDLWGTRV (66 aa).

This sequence belongs to the methylthiotransferase family. RimO subfamily. Requires [4Fe-4S] cluster as cofactor.

The protein localises to the cytoplasm. The enzyme catalyses L-aspartate(89)-[ribosomal protein uS12]-hydrogen + (sulfur carrier)-SH + AH2 + 2 S-adenosyl-L-methionine = 3-methylsulfanyl-L-aspartate(89)-[ribosomal protein uS12]-hydrogen + (sulfur carrier)-H + 5'-deoxyadenosine + L-methionine + A + S-adenosyl-L-homocysteine + 2 H(+). Its function is as follows. Catalyzes the methylthiolation of an aspartic acid residue of ribosomal protein uS12. This is Ribosomal protein uS12 methylthiotransferase RimO from Klebsiella pneumoniae subsp. pneumoniae (strain ATCC 700721 / MGH 78578).